The primary structure comprises 364 residues: WAT1-related protein At5g47470 (364 aa).

The next 10 membrane-spanning stretches (helical) occupy residues Met28–Met48, Phe59–Leu79, Leu93–Leu113, Ala124–Leu144, Ile158–Ser178, Val197–Gln217, Ile228–Leu248, Val255–Ala275, Pro293–Leu313, and Val319–Trp339. Positions Val40–Ser172 constitute an EamA 1 domain. Residues Ser219–Leu338 form the EamA 2 domain.

This sequence belongs to the drug/metabolite transporter (DMT) superfamily. Plant drug/metabolite exporter (P-DME) (TC 2.A.7.4) family.

It is found in the membrane. This chain is WAT1-related protein At5g47470, found in Arabidopsis thaliana (Mouse-ear cress).